The following is a 217-amino-acid chain: Killer cell lectin-like receptor subfamily B member 1F (217 aa).

Residues 1-45 are Cytoplasmic-facing; sequence MDTSKVHGNVKPFRCPGYKQASSPSFSPDACRCPHWHHLALKSGC. An LCK-binding motif motif is present at residues 31–34; it reads CRCP. Residues 46–66 form a helical; Signal-anchor for type II membrane protein membrane-spanning segment; sequence AGLILLLLSLIGLSVLVRFLV. The Extracellular segment spans residues 67–217; sequence QKPPIEKCSV…WICQKTLIHV (151 aa). N-linked (GlcNAc...) asparagine glycosylation occurs at Asn-81. Residues 101 to 211 form the C-type lectin domain; that stretch reads HWNKCLFVSQ…CSSDNHWICQ (111 aa). Intrachain disulfides connect Cys-122–Cys-210 and Cys-189–Cys-202.

Highly expressed in dendritic cells. Detectable in natural killer cells.

The protein localises to the membrane. Its function is as follows. Binds CLEC2I/Clr-g leading to activation of natural killer cells or costimulation of IL-2 production and proliferation of T-cells in response to antigen stimulation. May contribute to the formation of the immunological synapse between T-cells and antigen-presenting dendritic cells. The protein is Killer cell lectin-like receptor subfamily B member 1F (Klrb1f) of Mus musculus (Mouse).